The following is a 90-amino-acid chain: Large ribosomal subunit protein eL31 (90 aa).

Belongs to the eukaryotic ribosomal protein eL31 family.

In Natronomonas pharaonis (strain ATCC 35678 / DSM 2160 / CIP 103997 / JCM 8858 / NBRC 14720 / NCIMB 2260 / Gabara) (Halobacterium pharaonis), this protein is Large ribosomal subunit protein eL31.